The sequence spans 351 residues: Biotin synthase (351 aa).

Positions 48–265 constitute a Radical SAM core domain; the sequence is NKVRIHILDN…LCMFRLINPD (218 aa). Positions 63, 67, and 70 each coordinate [4Fe-4S] cluster. 4 residues coordinate [2Fe-2S] cluster: Cys107, Cys139, Cys199, and Arg269.

This sequence belongs to the radical SAM superfamily. Biotin synthase family. In terms of assembly, homodimer. Requires [4Fe-4S] cluster as cofactor. [2Fe-2S] cluster serves as cofactor.

It catalyses the reaction (4R,5S)-dethiobiotin + (sulfur carrier)-SH + 2 reduced [2Fe-2S]-[ferredoxin] + 2 S-adenosyl-L-methionine = (sulfur carrier)-H + biotin + 2 5'-deoxyadenosine + 2 L-methionine + 2 oxidized [2Fe-2S]-[ferredoxin]. It participates in cofactor biosynthesis; biotin biosynthesis; biotin from 7,8-diaminononanoate: step 2/2. Its function is as follows. Catalyzes the conversion of dethiobiotin (DTB) to biotin by the insertion of a sulfur atom into dethiobiotin via a radical-based mechanism. This Leptospira interrogans serogroup Icterohaemorrhagiae serovar Lai (strain 56601) protein is Biotin synthase.